The following is a 334-amino-acid chain: L-lactate dehydrogenase B chain (334 aa).

At Ala2 the chain carries N-acetylalanine. An N6-acetyllysine modification is found at Lys7. A Phosphoserine modification is found at Ser44. NAD(+) contacts are provided by residues 53 to 58 (DVLEDK) and Arg100. Lys58 is subject to N6-acetyllysine. Arg107 contacts substrate. Residue Lys119 is modified to N6-acetyllysine. NAD(+) is bound at residue Asn139. Asn139 and Arg170 together coordinate substrate. His194 acts as the Proton acceptor in catalysis. At Tyr240 the chain carries Phosphotyrosine. A substrate-binding site is contributed by Thr249. N6-acetyllysine is present on Lys329.

The protein belongs to the LDH/MDH superfamily. LDH family. In terms of assembly, homotetramer. Interacts with PTEN upstream reading frame protein MP31; the interaction leads to inhibition of mitochondrial lactate dehydrogenase activity, preventing conversion of lactate to pyruvate in mitochondria.

Its subcellular location is the cytoplasm. It localises to the mitochondrion inner membrane. The catalysed reaction is (S)-lactate + NAD(+) = pyruvate + NADH + H(+). Its pathway is fermentation; pyruvate fermentation to lactate; (S)-lactate from pyruvate: step 1/1. Functionally, interconverts simultaneously and stereospecifically pyruvate and lactate with concomitant interconversion of NADH and NAD(+). This Bos taurus (Bovine) protein is L-lactate dehydrogenase B chain (LDHB).